Consider the following 288-residue polypeptide: Light-independent protochlorophyllide reductase iron-sulfur ATP-binding protein (288 aa).

ATP contacts are provided by residues 10-15 and lysine 39; that span reads GIGKST. Residue serine 14 coordinates Mg(2+). The [4Fe-4S] cluster site is built by cysteine 95 and cysteine 129. 180–181 contacts ATP; that stretch reads NR.

The protein belongs to the NifH/BchL/ChlL family. As to quaternary structure, homodimer. Protochlorophyllide reductase is composed of three subunits; ChlL, ChlN and ChlB. [4Fe-4S] cluster is required as a cofactor.

It carries out the reaction chlorophyllide a + oxidized 2[4Fe-4S]-[ferredoxin] + 2 ADP + 2 phosphate = protochlorophyllide a + reduced 2[4Fe-4S]-[ferredoxin] + 2 ATP + 2 H2O. It functions in the pathway porphyrin-containing compound metabolism; chlorophyll biosynthesis (light-independent). In terms of biological role, component of the dark-operative protochlorophyllide reductase (DPOR) that uses Mg-ATP and reduced ferredoxin to reduce ring D of protochlorophyllide (Pchlide) to form chlorophyllide a (Chlide). This reaction is light-independent. The L component serves as a unique electron donor to the NB-component of the complex, and binds Mg-ATP. In Nostoc punctiforme (strain ATCC 29133 / PCC 73102), this protein is Light-independent protochlorophyllide reductase iron-sulfur ATP-binding protein.